We begin with the raw amino-acid sequence, 469 residues long: Citrate synthase, mitochondrial (469 aa).

Residues 1–31 (MTLLTASSRAAARLLGAKNSSCIIFAARHAS) constitute a mitochondrion transit peptide. Catalysis depends on residues histidine 304 and histidine 350. Arginine 359 is a binding site for oxaloacetate. Aspartate 405 is a catalytic residue. 2 residues coordinate oxaloacetate: arginine 431 and arginine 451.

The protein belongs to the citrate synthase family. As to quaternary structure, homodimer.

Its subcellular location is the mitochondrion matrix. It catalyses the reaction oxaloacetate + acetyl-CoA + H2O = citrate + CoA + H(+). It functions in the pathway carbohydrate metabolism; tricarboxylic acid cycle; isocitrate from oxaloacetate: step 1/2. In terms of biological role, key enzyme of the Krebs tricarboxylic acid cycle which catalyzes the synthesis of citrate from acetyl coenzyme A and oxaloacetate. This is Citrate synthase, mitochondrial (CS) from Amblyrhynchus cristatus (Galapagos marine iguana).